The primary structure comprises 1220 residues: ATP-dependent helicase/deoxyribonuclease subunit B (1220 aa).

The 281-residue stretch at 1 to 281 folds into the UvrD-like helicase ATP-binding domain; sequence MSMRFIVGRA…VFLTETHRFE (281 aa). ATP is bound at residue 8 to 15; that stretch reads GRAGTGKS. One can recognise a UvrD-like helicase C-terminal domain in the interval 283 to 590; the sequence is AGLKHLERFY…LVGSLDRSRN (308 aa). Residue cysteine 788 coordinates [4Fe-4S] cluster. Residues 989 to 1008 are disordered; it reads LAEGSKGSEGSEGSEDSEDS. Cysteine 1128, cysteine 1131, and cysteine 1137 together coordinate [4Fe-4S] cluster. Positions 1162 to 1171 are enriched in polar residues; that stretch reads RVQSQDSEQY. Positions 1162–1220 are disordered; the sequence is RVQSQDSEQYPEQHPPTSVPGETSRRALQKDGGNSPRGQELIWLGEDEAGAGKEDDGHE. A compositionally biased stretch (basic and acidic residues) spans 1211 to 1220; that stretch reads GAGKEDDGHE.

Belongs to the helicase family. AddB/RexB type 1 subfamily. Heterodimer of AddA and AddB. The cofactor is Mg(2+). [4Fe-4S] cluster is required as a cofactor.

In terms of biological role, the heterodimer acts as both an ATP-dependent DNA helicase and an ATP-dependent, dual-direction single-stranded exonuclease. Recognizes the chi site generating a DNA molecule suitable for the initiation of homologous recombination. The AddB subunit has 5' -&gt; 3' nuclease activity but not helicase activity. The polypeptide is ATP-dependent helicase/deoxyribonuclease subunit B (Desulfitobacterium hafniense (strain Y51)).